The chain runs to 235 residues: Intron-encoded endonuclease I-SceI (235 aa).

The protein belongs to the LAGLIDADG endonuclease family. In terms of assembly, monomer. Requires Mg(2+) as cofactor.

It is found in the mitochondrion. Functionally, mitochondrial DNA endonuclease involved in intron homing. It introduces a specific double-strand break in the DNA of the 21S rRNA gene and thus mediates the insertion of an intron, containing its own coding sequence (group I intron), into an intronless gene. Specifically recognizes and cleaves the sequence 5'-TAGGGATAACAGGGTAAT-3'. In Saccharomyces cerevisiae (strain ATCC 204508 / S288c) (Baker's yeast), this protein is Intron-encoded endonuclease I-SceI (SCEI).